The sequence spans 508 residues: Zinc finger CCCH-type with G patch domain-containing protein (508 aa).

The C3H1-type zinc finger occupies 154-177; that stretch reads PCNYYLEGECRFDETRCRYSHGAL. The disordered stretch occupies residues 253 to 279; that stretch reads DDELSSDSEETNETDGSDAANESDMDD. In terms of domain architecture, G-patch spans 309–355; that stretch reads TRGIGSKLMASMGYIHGTGLGSDGRGIVTPVSAQILPQGRSLDACME. Over residues 486 to 495 the composition is skewed to polar residues; sequence QAQESSLSKE. Positions 486–508 are disordered; sequence QAQESSLSKEQQTRKSKNKMFEF. A compositionally biased stretch (basic residues) spans 499-508; it reads RKSKNKMFEF.

Its subcellular location is the nucleus. Functionally, transcription repressor. The protein is Zinc finger CCCH-type with G patch domain-containing protein of Drosophila virilis (Fruit fly).